The sequence spans 468 residues: Probable Xaa-Pro aminopeptidase pepP (468 aa).

Mn(2+) contacts are provided by D265, D276, E399, and E439.

This sequence belongs to the peptidase M24B family. Mn(2+) is required as a cofactor.

The catalysed reaction is Release of any N-terminal amino acid, including proline, that is linked to proline, even from a dipeptide or tripeptide.. Functionally, catalyzes the removal of a penultimate prolyl residue from the N-termini of peptides. The protein is Probable Xaa-Pro aminopeptidase pepP (pepP) of Aspergillus fumigatus (strain CBS 144.89 / FGSC A1163 / CEA10) (Neosartorya fumigata).